A 595-amino-acid polypeptide reads, in one-letter code: Probable xyloglucan glycosyltransferase 9 (595 aa).

Helical transmembrane passes span A30 to W50 and A77 to I97. D177 is an active-site residue. Positions 236 and 238 each coordinate substrate. D330 is a catalytic residue. 4 helical membrane passes run L408 to V428, L433 to S453, I545 to L564, and I570 to I590.

It belongs to the glycosyltransferase 2 family. Plant cellulose synthase-like C subfamily.

Its subcellular location is the golgi apparatus membrane. Probable beta-1,4-glucan synthase rather involved in the synthesis of the xyloglucan backbone than cellulose. Seems to work simultaneously with xyloglucan 6-xylosyltransferase. Xyloglucan is a noncellulosic polysaccharides of plant cell wall and consists of a glucan backbone substituted by xylose, galactose and fucose. The protein is Probable xyloglucan glycosyltransferase 9 (CSLC9) of Oryza sativa subsp. japonica (Rice).